The chain runs to 505 residues: Maturase K (505 aa).

The protein belongs to the intron maturase 2 family. MatK subfamily.

It localises to the plastid. It is found in the chloroplast. Usually encoded in the trnK tRNA gene intron. Probably assists in splicing its own and other chloroplast group II introns. This chain is Maturase K, found in Glycine max (Soybean).